We begin with the raw amino-acid sequence, 984 residues long: Zinc finger and BTB domain-containing protein 4 (984 aa).

The 102-residue stretch at 30 to 131 folds into the BTB domain; the sequence is CDVTLIAGDT…IYSARLALPG (102 aa). K40 participates in a covalent cross-link: Glycyl lysine isopeptide (Lys-Gly) (interchain with G-Cter in SUMO2). Disordered stretches follow at residues 71 to 104, 172 to 210, and 227 to 262; these read TGGS…PPRV, MVTS…RRPF, and THEA…ASAL. A compositionally biased stretch (low complexity) spans 74 to 88; the sequence is SAPSPATTTAASSSS. The interval 165–324 is interaction with CBFA2T3; that stretch reads VPPAPSSMVT…CRYCEKVFAL (160 aa). The C2H2-type 1; atypical zinc finger occupies 210–232; the sequence is FPCPRCGKSFIHPKRLQTHEAQC. Residues 242 to 255 show a composition bias toward gly residues; it reads AGLGPGGSGPGGPA. 3 consecutive C2H2-type zinc fingers follow at residues 285-307, 313-335, and 341-364; these read YVCA…SNVH, YPCR…EVWH, and YQCI…RAFH. At S367 the chain carries Phosphoserine. Residues 461-575 form a disordered region; sequence GSSSSGAAGG…GSSQLQAPPP (115 aa). Over residues 467-477 the composition is skewed to gly residues; the sequence is AAGGGPVGTGG. 2 stretches are compositionally biased toward low complexity: residues 478-488 and 507-529; these read SQAASVITYTT and ATPT…ATAT. K548 participates in a covalent cross-link: Glycyl lysine isopeptide (Lys-Gly) (interchain with G-Cter in SUMO2). Residues 552–565 are compositionally biased toward gly residues; that stretch reads GVSGSGGSPTGTGR. Residue K590 forms a Glycyl lysine isopeptide (Lys-Gly) (interchain with G-Cter in SUMO2) linkage. Disordered regions lie at residues 593–696, 713–734, 756–836, 853–876, and 947–984; these read ISET…GERR, RKHQ…RSST, QRHA…VAGG, GGSR…ASEG, and QTAP…GDVG. Positions 604-627 are enriched in acidic residues; the sequence is SGEEVEESEEEEEEEEEEDQEDQE. The segment covering 628–637 has biased composition (basic and acidic residues); it reads ESKAGGEDQL. 2 C2H2-type zinc fingers span residues 697–719 and 736–758; these read HRCG…QEAH and FTCP…GQRH. Residues T766 and T768 each carry the phosphothreonine; by HIPK2 modification. The span at 807-819 shows a compositional bias: low complexity; the sequence is AAAAAAEASESAS. The segment covering 948-966 has biased composition (pro residues); sequence TAPPTPPTPPPPLPLPVPP. T955 carries the phosphothreonine; by HIPK2 modification.

Interacts with HIPK2. Interacts with CBFA2T3. Interacts with ZBTB38. Post-translationally, phosphorylated by HIPK2. This phosphorylation reduces stability and triggers ZBTB4 protein degradation in response to DNA damage.

The protein localises to the nucleus. It is found in the chromosome. Its function is as follows. Transcriptional repressor with bimodal DNA-binding specificity. Represses transcription in a methyl-CpG-dependent manner. Binds with a higher affinity to methylated CpG dinucleotides in the consensus sequence 5'-CGCG-3' but can also bind to the non-methylated consensus sequence 5'-CTGCNA-3' also known as the consensus kaiso binding site (KBS). Can also bind specifically to a single methyl-CpG pair and can bind hemimethylated DNA but with a lower affinity compared to methylated DNA. Plays a role in postnatal myogenesis, may be involved in the regulation of satellite cells self-renewal. In Rattus norvegicus (Rat), this protein is Zinc finger and BTB domain-containing protein 4 (Zbtb4).